The following is a 448-amino-acid chain: Divalent metal cation transporter MntH (448 aa).

The next 11 helical transmembrane spans lie at 41-61 (LFAF…PGNW), 69-89 (SEFG…AVLL), 117-137 (GFVL…AEVI), 147-167 (FGIP…LVLF), 176-196 (IEVI…AEMV), 215-235 (IVTN…TVMP), 270-290 (FSLT…AAAF), 307-327 (LLNP…ALLA), 363-383 (VLAI…GINE), 384-404 (LLIF…IPLV), and 424-444 (IVSW…LFYT).

Belongs to the NRAMP family.

It localises to the cell membrane. In terms of biological role, h(+)-stimulated, divalent metal cation uptake system. This chain is Divalent metal cation transporter MntH, found in Listeria innocua serovar 6a (strain ATCC BAA-680 / CLIP 11262).